A 914-amino-acid polypeptide reads, in one-letter code: Translation initiation factor IF-2 (914 aa).

Disordered regions lie at residues 246-271 and 293-313; these read EDGE…KKKG and SGMD…QRRM. The segment covering 249–266 has biased composition (basic and acidic residues); it reads EAAKKKAAKPDGGEDVGV. One can recognise a tr-type G domain in the interval 411–581; it reads TRPPVVTIMG…LAEAEIRELK (171 aa). Residues 420 to 427 are G1; that stretch reads GHVDHGKT. Residue 420–427 participates in GTP binding; that stretch reads GHVDHGKT. Residues 445-449 form a G2 region; it reads GITQH. The interval 467–470 is G3; sequence DTPG. Residues 467-471 and 521-524 contribute to the GTP site; these read DTPGH and NKID. The G4 stretch occupies residues 521–524; the sequence is NKID. Residues 557 to 559 form a G5 region; it reads SAK.

Belongs to the TRAFAC class translation factor GTPase superfamily. Classic translation factor GTPase family. IF-2 subfamily.

It localises to the cytoplasm. Its function is as follows. One of the essential components for the initiation of protein synthesis. Protects formylmethionyl-tRNA from spontaneous hydrolysis and promotes its binding to the 30S ribosomal subunits. Also involved in the hydrolysis of GTP during the formation of the 70S ribosomal complex. This Chlorobaculum tepidum (strain ATCC 49652 / DSM 12025 / NBRC 103806 / TLS) (Chlorobium tepidum) protein is Translation initiation factor IF-2.